The sequence spans 506 residues: 5-OH-xanthotoxin synthase (506 aa).

Residues 3–23 (PVVIFLVLAFPIASVYLLFYH) form a helical membrane-spanning segment. Positions 365–370 (TGPLLI) are substrate specificity. Residue cysteine 446 participates in heme binding.

The protein belongs to the cytochrome P450 family. Requires heme as cofactor.

Its subcellular location is the microsome membrane. It catalyses the reaction xanthotoxin + reduced [NADPH--hemoprotein reductase] + O2 = 5-hydroxyxanthotoxin + oxidized [NADPH--hemoprotein reductase] + H2O + 2 H(+). Its pathway is secondary metabolite biosynthesis. In terms of biological role, involved in the biosynthesis of coumarins and furanocoumarins (FCs), natural products required for defense responses against attacks by predators with potential medical and agroindustrial usages such as anticoagulant, rodenticide and artificial vanilla substitutes. Catalyzes the conversion of xanthotoxin into 5-hydroxyxanthotoxin. This chain is 5-OH-xanthotoxin synthase, found in Pastinaca sativa (Wild parsnip).